The chain runs to 737 residues: Polyribonucleotide nucleotidyltransferase (737 aa).

Residues D489 and D495 each contribute to the Mg(2+) site. Residues 556–615 (PKIDTIKIDVDKIKIVIGKGGETIDKIIAETGVKIDIDEEGNVSIYSSDQDAINRAKEII) form the KH domain. An S1 motif domain is found at 625–693 (DEVYRAKVVR…EKGRIDASMK (69 aa)). The segment at 691–737 (SMKALLPRPPKPEHDEKGEKSERPHRPRHHKDHKPKKEFTETPKDSE) is disordered. Positions 700 to 714 (PKPEHDEKGEKSERP) are enriched in basic and acidic residues. Basic residues predominate over residues 715–724 (HRPRHHKDHK). The span at 725-737 (PKKEFTETPKDSE) shows a compositional bias: basic and acidic residues.

Belongs to the polyribonucleotide nucleotidyltransferase family. It depends on Mg(2+) as a cofactor.

It is found in the cytoplasm. It catalyses the reaction RNA(n+1) + phosphate = RNA(n) + a ribonucleoside 5'-diphosphate. Involved in mRNA degradation. Catalyzes the phosphorolysis of single-stranded polyribonucleotides processively in the 3'- to 5'-direction. The polypeptide is Polyribonucleotide nucleotidyltransferase (Streptococcus pneumoniae serotype 19F (strain G54)).